The sequence spans 94 residues: Co-chaperonin GroES (94 aa).

The protein belongs to the GroES chaperonin family. In terms of assembly, heptamer of 7 subunits arranged in a ring. Interacts with the chaperonin GroEL.

The protein resides in the cytoplasm. Together with the chaperonin GroEL, plays an essential role in assisting protein folding. The GroEL-GroES system forms a nano-cage that allows encapsulation of the non-native substrate proteins and provides a physical environment optimized to promote and accelerate protein folding. GroES binds to the apical surface of the GroEL ring, thereby capping the opening of the GroEL channel. The polypeptide is Co-chaperonin GroES (Bacillus sp. (strain PS3)).